The following is a 250-amino-acid chain: Cobalt transport protein CbiM (250 aa).

A signal peptide spans methionine 1–alanine 25. The next 6 helical transmembrane spans lie at leucine 33–leucine 53, valine 68–valine 88, leucine 100–phenylalanine 120, threonine 132–phenylalanine 152, alanine 163–isoleucine 183, and glycine 205–valine 225.

The protein belongs to the CbiM family. In terms of assembly, forms an energy-coupling factor (ECF) transporter complex composed of an ATP-binding protein (A component, CbiO), a transmembrane protein (T component, CbiQ) and 2 possible substrate-capture proteins (S components, CbiM and CbiN) of unknown stoichimetry.

The protein resides in the cell membrane. It functions in the pathway cofactor biosynthesis; adenosylcobalamin biosynthesis. Its function is as follows. Part of the energy-coupling factor (ECF) transporter complex CbiMNOQ involved in cobalt import. The sequence is that of Cobalt transport protein CbiM from Clostridioides difficile (strain R20291) (Peptoclostridium difficile).